Consider the following 388-residue polypeptide: Putative 8-amino-7-oxononanoate synthase (388 aa).

Arg18 provides a ligand contact to substrate. 105-106 (GY) is a pyridoxal 5'-phosphate binding site. Substrate is bound at residue His130. Residues Ser176, 201-204 (DDAH), and 232-235 (TLSK) contribute to the pyridoxal 5'-phosphate site. Lys235 is modified (N6-(pyridoxal phosphate)lysine). Thr349 is a substrate binding site.

It belongs to the class-II pyridoxal-phosphate-dependent aminotransferase family. BioF subfamily. As to quaternary structure, homodimer. Requires pyridoxal 5'-phosphate as cofactor.

It catalyses the reaction 6-carboxyhexanoyl-[ACP] + L-alanine + H(+) = (8S)-8-amino-7-oxononanoate + holo-[ACP] + CO2. It functions in the pathway cofactor biosynthesis; biotin biosynthesis. In terms of biological role, catalyzes the decarboxylative condensation of pimeloyl-[acyl-carrier protein] and L-alanine to produce 8-amino-7-oxononanoate (AON), [acyl-carrier protein], and carbon dioxide. The polypeptide is Putative 8-amino-7-oxononanoate synthase (bioF) (Acetivibrio thermocellus (strain ATCC 27405 / DSM 1237 / JCM 9322 / NBRC 103400 / NCIMB 10682 / NRRL B-4536 / VPI 7372) (Clostridium thermocellum)).